Reading from the N-terminus, the 283-residue chain is Protein/nucleic acid deglycase HchA (283 aa).

Residues His86, Glu91, and His123 each contribute to the Zn(2+) site. Cys185 functions as the Nucleophile in the catalytic mechanism.

This sequence belongs to the peptidase C56 family. HchA subfamily. In terms of assembly, homodimer.

Its subcellular location is the cytoplasm. It catalyses the reaction N(omega)-(1-hydroxy-2-oxopropyl)-L-arginyl-[protein] + H2O = lactate + L-arginyl-[protein] + H(+). The enzyme catalyses N(6)-(1-hydroxy-2-oxopropyl)-L-lysyl-[protein] + H2O = lactate + L-lysyl-[protein] + H(+). It carries out the reaction S-(1-hydroxy-2-oxopropyl)-L-cysteinyl-[protein] + H2O = lactate + L-cysteinyl-[protein] + H(+). The catalysed reaction is N(omega)-(1-hydroxy-2-oxoethyl)-L-arginyl-[protein] + H2O = L-arginyl-[protein] + glycolate + H(+). It catalyses the reaction N(6)-(1-hydroxy-2-oxoethyl)-L-lysyl-[protein] + H2O = glycolate + L-lysyl-[protein] + H(+). The enzyme catalyses S-(1-hydroxy-2-oxoethyl)-L-cysteinyl-[protein] + H2O = glycolate + L-cysteinyl-[protein] + H(+). It carries out the reaction N(2)-(1-hydroxy-2-oxopropyl)-dGTP + H2O = lactate + dGTP + H(+). The catalysed reaction is N(2)-(1-hydroxy-2-oxopropyl)-GTP + H2O = lactate + GTP + H(+). It catalyses the reaction N(2)-(1-hydroxy-2-oxopropyl)-GDP + H2O = lactate + GDP + H(+). The enzyme catalyses N(2)-(1-hydroxy-2-oxopropyl)-GMP + H2O = lactate + GMP + H(+). It carries out the reaction N(2)-(1-hydroxy-2-oxoethyl)-dGTP + H2O = dGTP + glycolate + H(+). The catalysed reaction is N(2)-(1-hydroxy-2-oxoethyl)-GTP + H2O = glycolate + GTP + H(+). It catalyses the reaction N(2)-(1-hydroxy-2-oxoethyl)-GDP + H2O = glycolate + GDP + H(+). The enzyme catalyses N(2)-(1-hydroxy-2-oxoethyl)-GMP + H2O = glycolate + GMP + H(+). It carries out the reaction an N(2)-(1-hydroxy-2-oxopropyl)-guanosine in RNA + H2O = a guanosine in RNA + lactate + H(+). The catalysed reaction is an N(2)-(1-hydroxy-2-oxopropyl)-2'-deoxyguanosine in DNA + H2O = a 2'-deoxyguanosine in DNA + lactate + H(+). It catalyses the reaction an N(2)-(1-hydroxy-2-oxoethyl)-guanosine in RNA + H2O = a guanosine in RNA + glycolate + H(+). The enzyme catalyses an N(2)-(1-hydroxy-2-oxoethyl)-2'-deoxyguanosine in DNA + H2O = a 2'-deoxyguanosine in DNA + glycolate + H(+). Its function is as follows. Protein and nucleotide deglycase that catalyzes the deglycation of the Maillard adducts formed between amino groups of proteins or nucleotides and reactive carbonyl groups of glyoxals. Thus, functions as a protein deglycase that repairs methylglyoxal- and glyoxal-glycated proteins, and releases repaired proteins and lactate or glycolate, respectively. Deglycates cysteine, arginine and lysine residues in proteins, and thus reactivates these proteins by reversing glycation by glyoxals. Acts on early glycation intermediates (hemithioacetals and aminocarbinols), preventing the formation of Schiff bases and advanced glycation endproducts (AGE). Also functions as a nucleotide deglycase able to repair glycated guanine in the free nucleotide pool (GTP, GDP, GMP, dGTP) and in DNA and RNA. Is thus involved in a major nucleotide repair system named guanine glycation repair (GG repair), dedicated to reversing methylglyoxal and glyoxal damage via nucleotide sanitization and direct nucleic acid repair. Plays an important role in protecting cells from carbonyl stress. The polypeptide is Protein/nucleic acid deglycase HchA (Escherichia coli O8 (strain IAI1)).